Reading from the N-terminus, the 226-residue chain is E3 ubiquitin-protein ligase RNF186 (226 aa).

An RING-type zinc finger spans residues 39–85; sequence CLVCREPYNCARSPKLLSCQHTFCAVCLKLLLYVQEDTWSIPCPLCR. The next 2 helical transmembrane spans lie at 157-177 and 179-199; these read HLLLLALVIVLILPFIYPGVI and WVLAFVIALALLMSTLFCCHP.

As to quaternary structure, interacts with BNIP1. Polyubiquitinated. 'Lys-29'-linked autoubiquitination leads to proteasomal degradation.

The protein localises to the endoplasmic reticulum membrane. The catalysed reaction is S-ubiquitinyl-[E2 ubiquitin-conjugating enzyme]-L-cysteine + [acceptor protein]-L-lysine = [E2 ubiquitin-conjugating enzyme]-L-cysteine + N(6)-ubiquitinyl-[acceptor protein]-L-lysine.. It functions in the pathway protein modification; protein ubiquitination. In terms of biological role, E3 ubiquitin protein ligase that is part of an apoptotic signaling pathway activated by endoplasmic reticulum stress. Stimulates the expression of proteins specific of the unfolded protein response (UPR), ubiquitinates BNIP1 and regulates its localization to the mitochondrion and induces calcium release from the endoplasmic reticulum that ultimately leads to cell apoptosis. Plays a role in the maintenance of intestinal homeostasis and clearance of enteric pathogens. Upon NOD2 stimulation, ubiquitinates the ER stress sensor activating transcription factor 6/ATF6 and promotes the unfolded protein response UPR. Participates in basal level of autophagy maintenance by regulating the ubiquitination of EPHB2. Upon stimulation by ligand EFNB1, ubiquitinates EPHB2 and further recruits MAP1LC3B for autophagy induction. Controls nutrient sensing by ubiquitinating Sestrin-2/SESN2, which is an intracellular sensor of cytosolic leucine and inhibitor of mTORC1 activity. The sequence is that of E3 ubiquitin-protein ligase RNF186 from Mus musculus (Mouse).